A 247-amino-acid polypeptide reads, in one-letter code: Chymase (247 aa).

Positions 1–19 (MNLHALCLLLLLLGSSTKA) are cleaved as a signal peptide. Residues 20–21 (GE) constitute a propeptide, activation peptide. Residues 22–245 (IIGGTECIPH…YRPWINKILR (224 aa)) enclose the Peptidase S1 domain. Cysteines 51 and 67 form a disulfide. The active-site Charge relay system is histidine 66. An N-linked (GlcNAc...) asparagine glycan is attached at asparagine 80. The Charge relay system role is filled by aspartate 110. 2 cysteine pairs are disulfide-bonded: cysteine 144/cysteine 209 and cysteine 175/cysteine 188. The active-site Charge relay system is serine 203.

This sequence belongs to the peptidase S1 family. Granzyme subfamily. Mast cells.

The protein localises to the secreted. Its subcellular location is the cytoplasmic granule. It catalyses the reaction Preferential cleavage: Phe-|-Xaa &gt; Tyr-|-Xaa &gt; Trp-|-Xaa &gt; Leu-|-Xaa.. Major secreted protease of mast cells with suspected roles in vasoactive peptide generation, extracellular matrix degradation, and regulation of gland secretion. The sequence is that of Chymase (Cma1) from Rattus norvegicus (Rat).